Reading from the N-terminus, the 180-residue chain is ATP-dependent protease subunit HslV (180 aa).

The active site involves Thr8. Na(+) contacts are provided by Ala165, Cys168, and Thr171.

It belongs to the peptidase T1B family. HslV subfamily. In terms of assembly, a double ring-shaped homohexamer of HslV is capped on each side by a ring-shaped HslU homohexamer. The assembly of the HslU/HslV complex is dependent on binding of ATP.

Its subcellular location is the cytoplasm. It carries out the reaction ATP-dependent cleavage of peptide bonds with broad specificity.. With respect to regulation, allosterically activated by HslU binding. Protease subunit of a proteasome-like degradation complex believed to be a general protein degrading machinery. This is ATP-dependent protease subunit HslV from Macrococcus caseolyticus (strain JCSC5402) (Macrococcoides caseolyticum).